Consider the following 382-residue polypeptide: Fimbrial usher domain-containing protein YdeT (382 aa).

The chain is Fimbrial usher domain-containing protein YdeT (ydeT) from Escherichia coli O157:H7.